The following is a 406-amino-acid chain: CinA-like protein (406 aa).

Belongs to the CinA family.

This chain is CinA-like protein, found in Thermomicrobium roseum (strain ATCC 27502 / DSM 5159 / P-2).